Here is a 295-residue protein sequence, read N- to C-terminus: Probable porphobilinogen deaminase (295 aa).

The residue at position 234 (Cys-234) is an S-(dipyrrolylmethanemethyl)cysteine.

This sequence belongs to the HMBS family. Dipyrromethane serves as cofactor.

It catalyses the reaction 4 porphobilinogen + H2O = hydroxymethylbilane + 4 NH4(+). Its pathway is porphyrin-containing compound metabolism; protoporphyrin-IX biosynthesis; coproporphyrinogen-III from 5-aminolevulinate: step 2/4. Functionally, tetrapolymerization of the monopyrrole PBG into the hydroxymethylbilane pre-uroporphyrinogen in several discrete steps. The protein is Probable porphobilinogen deaminase (hemC) of Thermoplasma acidophilum (strain ATCC 25905 / DSM 1728 / JCM 9062 / NBRC 15155 / AMRC-C165).